The following is an 875-amino-acid chain: Alanine--tRNA ligase (875 aa).

Zn(2+) contacts are provided by His564, His568, Cys666, and His670.

It belongs to the class-II aminoacyl-tRNA synthetase family. It depends on Zn(2+) as a cofactor.

It localises to the cytoplasm. The enzyme catalyses tRNA(Ala) + L-alanine + ATP = L-alanyl-tRNA(Ala) + AMP + diphosphate. Its function is as follows. Catalyzes the attachment of alanine to tRNA(Ala) in a two-step reaction: alanine is first activated by ATP to form Ala-AMP and then transferred to the acceptor end of tRNA(Ala). Also edits incorrectly charged Ser-tRNA(Ala) and Gly-tRNA(Ala) via its editing domain. The sequence is that of Alanine--tRNA ligase from Mannheimia succiniciproducens (strain KCTC 0769BP / MBEL55E).